The following is a 626-amino-acid chain: Serine/threonine-protein kinase PknH (626 aa).

Residues 1 to 403 (MSDAQDSRVG…QTPRKTNPWP (403 aa)) are Cytoplasmic-facing. Positions 16–276 (YHLKRLLGRG…DLALAAHEAL (261 aa)) constitute a Protein kinase domain. ATP-binding positions include 22 to 30 (LGRGGMGEV) and Lys45. Catalysis depends on Asp139, which acts as the Proton acceptor. Phosphothreonine is present on Thr170. The disordered stretch occupies residues 292-396 (QESTLPAPPK…GGPSPWAQTP (105 aa)). Composition is skewed to pro residues over residues 297–308 (PAPPKPVPPPTM) and 316–342 (RQPP…PAQP). Residues 343 to 355 (GPAGQRPGPTGQP) show a composition bias toward low complexity. A helical membrane pass occupies residues 404 to 424 (LVAGAAAVVLVLVLGAIGIWI). Residues 425–626 (AIRPKPVQPP…AKIVDKVNKE (202 aa)) are Extracellular-facing. 2 disulfide bridges follow: Cys482–Cys545 and Cys587–Cys604.

It belongs to the protein kinase superfamily. Ser/Thr protein kinase family. Requires a divalent metal cation as cofactor. Autophosphorylated on threonine and serine residues. Dephosphorylated by PstP.

The protein resides in the cell membrane. The catalysed reaction is L-seryl-[protein] + ATP = O-phospho-L-seryl-[protein] + ADP + H(+). It carries out the reaction L-threonyl-[protein] + ATP = O-phospho-L-threonyl-[protein] + ADP + H(+). Inhibited by the kinase inhibitors staurosporine and H-7. Functionally, may regulate bacterial growth in response to external signals to facilitate adaptation to the host environment. In vitro, phosphorylates several substrates such as EmbR, DevR (DosR), DacB1 and Rv0681. In Mycobacterium tuberculosis (strain ATCC 25618 / H37Rv), this protein is Serine/threonine-protein kinase PknH (pknH).